Here is an 892-residue protein sequence, read N- to C-terminus: Inner centromere protein B (892 aa).

Disordered regions lie at residues 50 to 124 (AEPE…KRMT), 160 to 182 (EHERRSAEQKLRESEIEDSEMKT), 255 to 286 (LVNEQPLNLSNESATPTGSKSDRRSVRRSLVV), 305 to 470 (KRES…PPPH), 502 to 555 (KRNT…RRED), 569 to 687 (QLEE…RERE), 702 to 760 (ERAA…AAAA), and 797 to 819 (NYGMDLNSDDSTDDESQPRKPIP). Residues 60 to 69 (SQKRRRKKRT) are compositionally biased toward basic residues. Residues 90–99 (SANWSSSVRR) show a composition bias toward low complexity. Over residues 259–272 (QPLNLSNESATPTG) the composition is skewed to polar residues. Basic and acidic residues predominate over residues 305 to 315 (KRESMTREAVR). Residues 316-326 (KSIRQSISKKK) show a composition bias toward basic residues. Residues 332 to 343 (SSTSSQRSCHSS) show a composition bias toward low complexity. The span at 431-444 (RAVDELSDDERPSE) shows a compositional bias: basic and acidic residues. Residues 455–470 (PSPPCPPSKIVKPPPH) show a composition bias toward pro residues. Basic and acidic residues-rich tracts occupy residues 509 to 555 (PDPK…RRED), 569 to 602 (QLEEEKKKKFEQKFAQIDEKSEKVREDRMAEEKA), 609 to 687 (KKQE…RERE), and 702 to 754 (ERAA…KAKE). The tract at residues 512–725 (KSEEKERQRL…EERKKREQQQ (214 aa)) is SAH. The IN box stretch occupies residues 802 to 876 (LNSDDSTDDE…RTSSAVWHSP (75 aa)). Phosphoserine is present on residues Ser-869 and Ser-870.

It belongs to the INCENP family. Component of the CPC at least composed of survivin/birc5, incenp, cdca8/borealin and/or cdca9/dasra-A, and aurkb/aurora-B. Interacts (via C-terminus) with aurkb (via N-terminus and kinase domain). Interacts (via N-terminus) with birc5.1, birc5.2, cdca8 and cdca9. Interacts with mtus1.

It localises to the nucleus. Its subcellular location is the chromosome. The protein resides in the centromere. It is found in the cytoplasm. The protein localises to the cytoskeleton. It localises to the spindle. Its subcellular location is the midbody. The protein resides in the kinetochore. Functionally, component of the chromosomal passenger complex (CPC), a complex that acts as a key regulator of mitosis. The CPC complex has essential functions at the centromere in ensuring correct chromosome alignment and segregation and is required for chromatin-induced microtubule stabilization and spindle assembly. Acts as a scaffold regulating CPC localization and activity. The C-terminus associates with aurkb/aurora-B, the N-terminus associated with cdca8/borealin and/or cdca9/dasra-A tethers the CPC to the inner centromere, and the microtubule binding activity within the central SAH domain directs aurkb/aurora-B toward substrates near microtubules. Activates aurkb. This is Inner centromere protein B (incenp-b) from Xenopus laevis (African clawed frog).